A 268-amino-acid chain; its full sequence is Tryptophan synthase alpha chain (268 aa).

Catalysis depends on proton acceptor residues E49 and D60.

It belongs to the TrpA family. As to quaternary structure, tetramer of two alpha and two beta chains.

The catalysed reaction is (1S,2R)-1-C-(indol-3-yl)glycerol 3-phosphate + L-serine = D-glyceraldehyde 3-phosphate + L-tryptophan + H2O. It functions in the pathway amino-acid biosynthesis; L-tryptophan biosynthesis; L-tryptophan from chorismate: step 5/5. The alpha subunit is responsible for the aldol cleavage of indoleglycerol phosphate to indole and glyceraldehyde 3-phosphate. The polypeptide is Tryptophan synthase alpha chain (Salmonella typhimurium (strain LT2 / SGSC1412 / ATCC 700720)).